The primary structure comprises 89 residues: Small ribosomal subunit protein uS15 (89 aa).

It belongs to the universal ribosomal protein uS15 family. In terms of assembly, part of the 30S ribosomal subunit. Forms a bridge to the 50S subunit in the 70S ribosome, contacting the 23S rRNA.

In terms of biological role, one of the primary rRNA binding proteins, it binds directly to 16S rRNA where it helps nucleate assembly of the platform of the 30S subunit by binding and bridging several RNA helices of the 16S rRNA. Forms an intersubunit bridge (bridge B4) with the 23S rRNA of the 50S subunit in the ribosome. The sequence is that of Small ribosomal subunit protein uS15 from Prochlorococcus marinus (strain MIT 9215).